We begin with the raw amino-acid sequence, 105 residues long: MAAKVKKGDKVVVLTGRDKGRTGEVIQVMPKENRALVRGVNLVKRHQRQTQTQEGGIISKEAAIDLSNLAVADPKDGKPTRVGFRILEDGRKVRFAKRSGDLIDG.

The protein belongs to the universal ribosomal protein uL24 family. In terms of assembly, part of the 50S ribosomal subunit.

One of two assembly initiator proteins, it binds directly to the 5'-end of the 23S rRNA, where it nucleates assembly of the 50S subunit. Functionally, one of the proteins that surrounds the polypeptide exit tunnel on the outside of the subunit. This Methylobacterium sp. (strain 4-46) protein is Large ribosomal subunit protein uL24.